We begin with the raw amino-acid sequence, 793 residues long: RNA-binding protein spenito (793 aa).

2 disordered regions span residues 1 to 93 (MSSH…PPAE) and 243 to 296 (HHDY…KKDK). The span at 25 to 42 (SRSPGPASRSSLSRNSRS) shows a compositional bias: low complexity. Over residues 257–268 (RGGHPHHLHGHA) the composition is skewed to basic residues. The span at 285 to 296 (APYEKPESKKDK) shows a compositional bias: basic and acidic residues. 2 RRM domains span residues 314–391 (RTLF…YGKV) and 395–469 (TRMW…FAEL). Positions 507 to 623 (YAPRGGYSPY…RNDALASAST (117 aa)) are disordered. Residues 526–536 (GGYRGRGRGMY) are compositionally biased toward basic residues. A compositionally biased stretch (basic and acidic residues) spans 566 to 593 (DEWRRPPGESYDRGARSSSREPGVERSR). Positions 624-791 (VPDVARKCST…HLVIVVVRGG (168 aa)) constitute an SPOC domain.

The protein belongs to the RRM Spen family. Component of the WMM complex, a N6-methyltransferase complex composed of a catalytic subcomplex, named MAC, and of an associated subcomplex, named MACOM. The MAC subcomplex is composed of Ime4/Mettl3 and Mettl14. The MACOM subcomplex is composed of fl(2)d, Flacc/Xio, Hakai, vir, and, in some cases of nito. Interacts with Sxl. Interacts with Hipk; leading to phosphorylation. Phosphorylated by Hipk at Ser-23, Ser-25 and/or Ser-27; the precise position if phosphorylation sites is unknown. In terms of tissue distribution, widely expressed. Shows some enrichment in the central nervous system.

The protein resides in the nucleus. In terms of biological role, RNA-binding protein that acts as an associated component of the WMM complex, a complex that mediates N6-methyladenosine (m6A) methylation of mRNAs. M6a modification plays a role in the efficiency of mRNA splicing and is required for sex determination. In the WMM complex, may act by binding target RNAs and recruiting the WMM complex. Required for sex determination and dosage compensation via Sxl alternative splicing: m6A methylation acts as a key regulator of Sxl pre-mRNA and promotes female-specific alternative splicing of Sxl, which determines female physiognomy. M6A methylation is also required for neuronal functions. Acts as a positive regulator of canonical Wg signaling during wing disk and eye development. The protein is RNA-binding protein spenito of Drosophila melanogaster (Fruit fly).